Consider the following 102-residue polypeptide: NADH-quinone oxidoreductase subunit K (102 aa).

Transmembrane regions (helical) follow at residues 5-25 (ALTG…FGVL), 30-50 (ILFQ…AFIA), and 63-83 (MFVL…ALFL).

It belongs to the complex I subunit 4L family. As to quaternary structure, NDH-1 is composed of 14 different subunits. Subunits NuoA, H, J, K, L, M, N constitute the membrane sector of the complex.

The protein localises to the cell inner membrane. The enzyme catalyses a quinone + NADH + 5 H(+)(in) = a quinol + NAD(+) + 4 H(+)(out). NDH-1 shuttles electrons from NADH, via FMN and iron-sulfur (Fe-S) centers, to quinones in the respiratory chain. The immediate electron acceptor for the enzyme in this species is believed to be ubiquinone. Couples the redox reaction to proton translocation (for every two electrons transferred, four hydrogen ions are translocated across the cytoplasmic membrane), and thus conserves the redox energy in a proton gradient. The chain is NADH-quinone oxidoreductase subunit K from Rhodopseudomonas palustris (strain BisB18).